A 286-amino-acid polypeptide reads, in one-letter code: MQNKIDHKNIKKIGLVTRPNVSLDKEILKLQSILSIYKVELVLFKESSEILDLPKYGLDDLFKISDFVISLGGDGTLISLCRKACEYDKAVLGIHAGHLGFLTDFKVDEAENFFQAFFQGEFRIEKPYLLSVFLEDKQGKILEKLAFNDVVISKNNQAPMAHIEVFRKEKKFNEYFGDGLIVATPAGSTAYNLSANGPIVYTLAQAFILTPVCSHSLTQRSIVLPKGFEIEIMAKDCILCIDGQENYKMNDFKSIKVGLSDKNVALIHPKNRDYFQILKEKLHWGN.

Aspartate 74 (proton acceptor) is an active-site residue. NAD(+) contacts are provided by residues 74–75 (DG), 148–149 (ND), aspartate 178, alanine 186, 189–194 (TAYNLS), and glutamine 244.

This sequence belongs to the NAD kinase family. It depends on a divalent metal cation as a cofactor.

The protein localises to the cytoplasm. It catalyses the reaction NAD(+) + ATP = ADP + NADP(+) + H(+). Involved in the regulation of the intracellular balance of NAD and NADP, and is a key enzyme in the biosynthesis of NADP. Catalyzes specifically the phosphorylation on 2'-hydroxyl of the adenosine moiety of NAD to yield NADP. The protein is NAD kinase of Campylobacter jejuni subsp. doylei (strain ATCC BAA-1458 / RM4099 / 269.97).